We begin with the raw amino-acid sequence, 156 residues long: Bursicon (156 aa).

Positions 1 to 26 are cleaved as a signal peptide; the sequence is MYALDFLFIAFVYFAACHIQEKPVRA. Intrachain disulfides connect C37-C86, C51-C100, C61-C121, C65-C123, and C83-C126. Residues 37–127 form the CTCK domain; sequence CQMTPVIHIL…PLECMCRPCG (91 aa).

Heterodimer of burs and pburs.

It is found in the secreted. Final heterodimeric neurohormone released at the end of the molting cycle, involved in the sclerotization (tanning) of the insect cuticle, melanization and wing spreading. The chain is Bursicon from Manduca sexta (Tobacco hawkmoth).